A 392-amino-acid polypeptide reads, in one-letter code: Putative transactivator/viroplasmin protein (392 aa).

A coiled-coil region spans residues methionine 1 to asparagine 88. The segment at glutamate 358–threonine 392 is disordered.

Belongs to the caulimoviridae viroplasmin family.

Its subcellular location is the host cytoplasm. Enhances the translation of downstream ORFs on polycistronic mRNAs derived from cassava vein mosaic virus. In Cassava vein mosaic virus (CsVMV), this protein is Putative transactivator/viroplasmin protein.